The following is a 206-amino-acid chain: FMN-dependent NADH:quinone oxidoreductase 1 (206 aa).

Residues Ser9, 15 to 17, and 139 to 142 contribute to the FMN site; these read SVS and SRGG.

This sequence belongs to the azoreductase type 1 family. In terms of assembly, homodimer. The cofactor is FMN.

It catalyses the reaction 2 a quinone + NADH + H(+) = 2 a 1,4-benzosemiquinone + NAD(+). The enzyme catalyses N,N-dimethyl-1,4-phenylenediamine + anthranilate + 2 NAD(+) = 2-(4-dimethylaminophenyl)diazenylbenzoate + 2 NADH + 2 H(+). In terms of biological role, quinone reductase that provides resistance to thiol-specific stress caused by electrophilic quinones. Functionally, also exhibits azoreductase activity. Catalyzes the reductive cleavage of the azo bond in aromatic azo compounds to the corresponding amines. The protein is FMN-dependent NADH:quinone oxidoreductase 1 of Cupriavidus pinatubonensis (strain JMP 134 / LMG 1197) (Cupriavidus necator (strain JMP 134)).